The primary structure comprises 552 residues: MKGCLATMDKELWIERANDSLVKHFYEQQSGIEQRDGFESKLTFGTAGIRGKFGLGEGRLNKFTIEKLALGLARYLNAQTNNPTIVIHYDIRHLSTEFAQIIANVLANHQITVYLPDTYKTTPELSFAVRNLNTAAGIMITASHNPKDYNGIKVYGSDGAQLSTDASELASRYIEEVGDPLQIDIPISKQNTSYIKPFPKSVTDDYMKHIQNMIGYIPKSDLQVVFTSLHGTSVPIVPELLQSLNFNQFNLVEAQCKPDPNFSSVQSANPEDHRAFDQAVELANKSHADLLISTDPDADRLGIAECDAHGHITYFNGNQIGALLLNYRIQQTSQLRHRLMIQSIVSSELTKSLARYNNVEYKEVLTGFKFIAQEIRQLDDHQNMIFAFEESYGFLSEPFVRDKDAVQIVPLIIKYASELKLYGKTLKDALEQIYQTVGRHEDTLFSHTLEGLEGKKKINAIMTKFRSNPPQEIQGLKVKAIEDYLTSEVYQLDKDTTSQINSPKSNVIRVLFDEGFIALRPSGTEPKIKLYVSLKCPNFDDVAQKINAMIFS.

S143 functions as the Phosphoserine intermediate in the catalytic mechanism. S143, D295, D297, and D299 together coordinate Mg(2+).

Belongs to the phosphohexose mutase family. Requires Mg(2+) as cofactor.

It carries out the reaction alpha-D-glucose 1-phosphate = alpha-D-glucose 6-phosphate. It participates in glycolipid metabolism; diglucosyl-diacylglycerol biosynthesis. Catalyzes the interconversion between glucose-6-phosphate and alpha-glucose-1-phosphate. This is the first step in the biosynthesis of diglucosyl-diacylglycerol (Glc2-DAG), i.e. the predominant glycolipid found in the S.aureus membrane, which is also used as a membrane anchor for lipoteichoic acid (LTA). In Staphylococcus aureus (strain bovine RF122 / ET3-1), this protein is Phosphoglucomutase (pgcA).